We begin with the raw amino-acid sequence, 302 residues long: Sulfate adenylyltransferase subunit 2 (302 aa).

This sequence belongs to the PAPS reductase family. CysD subfamily. In terms of assembly, heterodimer composed of CysD, the smaller subunit, and CysN.

It carries out the reaction sulfate + ATP + H(+) = adenosine 5'-phosphosulfate + diphosphate. It functions in the pathway sulfur metabolism; hydrogen sulfide biosynthesis; sulfite from sulfate: step 1/3. Its function is as follows. With CysN forms the ATP sulfurylase (ATPS) that catalyzes the adenylation of sulfate producing adenosine 5'-phosphosulfate (APS) and diphosphate, the first enzymatic step in sulfur assimilation pathway. APS synthesis involves the formation of a high-energy phosphoric-sulfuric acid anhydride bond driven by GTP hydrolysis by CysN coupled to ATP hydrolysis by CysD. This Methylococcus capsulatus (strain ATCC 33009 / NCIMB 11132 / Bath) protein is Sulfate adenylyltransferase subunit 2.